The chain runs to 188 residues: Elongation factor P (188 aa).

The protein belongs to the elongation factor P family.

It localises to the cytoplasm. It participates in protein biosynthesis; polypeptide chain elongation. Involved in peptide bond synthesis. Stimulates efficient translation and peptide-bond synthesis on native or reconstituted 70S ribosomes in vitro. Probably functions indirectly by altering the affinity of the ribosome for aminoacyl-tRNA, thus increasing their reactivity as acceptors for peptidyl transferase. The sequence is that of Elongation factor P from Bradyrhizobium sp. (strain BTAi1 / ATCC BAA-1182).